The primary structure comprises 776 residues: Microtubule-associated protein tau (776 aa).

Over residues 1 to 26 (MAEPRQEFDVMEDHAGTYGLGDRKDQ) the composition is skewed to basic and acidic residues. The tract at residues 1–591 (MAEPRQEFDV…PVPMPDLKNV (591 aa)) is disordered. A2 bears the N-acetylalanine mark. Y18 and Y29 each carry phosphotyrosine. Residue K44 forms a Glycyl lysine isopeptide (Lys-Gly) (interchain with G-Cter in ubiquitin) linkage. S46 and S61 each carry phosphoserine. Residues 61 to 71 (SETSDAKSTPT) are compositionally biased toward polar residues. Phosphothreonine occurs at positions 69, 71, and 111. Composition is skewed to basic and acidic residues over residues 179–189 (EGGRHAPELLK) and 207–216 (GGKERPGIKE). Acidic residues predominate over residues 217-228 (EVDEDRDVDESS). Basic and acidic residues predominate over residues 314–323 (EQAHSEEHLG). The segment covering 325-340 (AAFPGAPGEGPEAQGP) has biased composition (low complexity). Basic and acidic residues-rich tracts occupy residues 344–356 (EDTK…EPSE) and 381–393 (KSKD…DKKA). Positions 442 to 453 (VSSVTXRTGSSG) are enriched in low complexity. The segment covering 455–466 (KEMKLKGADGKT) has biased composition (basic and acidic residues). T470 bears the Phosphothreonine mark. An Omega-N-methylarginine modification is found at R472. Residue K480 is modified to N6,N6-dimethyllysine; alternate. K480 is modified (N6-acetyllysine; alternate). T486, T492, and T498 each carry phosphothreonine. Phosphoserine is present on residues S502, S526, and S530. Over residues 517–528 (KSERGEPPKSGD) the composition is skewed to basic and acidic residues. The span at 529-549 (RSGYSSPGSPGTPGSRSRTPS) shows a compositional bias: low complexity. Phosphotyrosine is present on Y532. 3 positions are modified to phosphoserine: S533, S534, and S537. A phosphothreonine mark is found at T540 and T547. Position 549 is a phosphoserine (S549). Position 552 is a phosphothreonine (T552). K560 bears the N6-acetyllysine mark. T566 is subject to Phosphothreonine. A phosphoserine mark is found at S570 and S572. 4 Tau/MAP repeats span residues 579–609 (QTAP…GGGK), 610–640 (VQII…GGGS), 641–671 (VQIV…GGGQ), and 672–703 (VEVK…GGGN). A Glycyl lysine isopeptide (Lys-Gly) (interchain with G-Cter in ubiquitin) cross-link involves residue K589. N6-acetyllysine; alternate is present on K594. K594 carries the N6-methyllysine; alternate modification. K594 is covalently cross-linked (Glycyl lysine isopeptide (Lys-Gly) (interchain with G-Cter in ubiquitin); alternate). Phosphoserine is present on S597. K602 is covalently cross-linked (Glycyl lysine isopeptide (Lys-Gly) (interchain with G-Cter in ubiquitin)). K616 is subject to N6-acetyllysine; alternate. A Glycyl lysine isopeptide (Lys-Gly) (interchain with G-Cter in ubiquitin); alternate cross-link involves residue K616. Phosphoserine is present on residues S620 and S624. Position 625 is an N6-acetyllysine (K625). The residue at position 628 (S628) is a Phosphoserine. K633 is modified (N6-acetyllysine; alternate). A Glycyl lysine isopeptide (Lys-Gly) (interchain with G-Cter in ubiquitin); alternate cross-link involves residue K633. The residue at position 640 (S640) is a Phosphoserine. K646 is subject to N6,N6-dimethyllysine; alternate. N6-acetyllysine; alternate occurs at positions 646, 652, and 656. Glycyl lysine isopeptide (Lys-Gly) (interchain with G-Cter in ubiquitin); alternate cross-links involve residues K646, K652, and K656. The residue at position 659 (S659) is a Phosphoserine. K666, K678, and K682 each carry N6-acetyllysine; alternate. Glycyl lysine isopeptide (Lys-Gly) (interchain with G-Cter in ubiquitin); alternate cross-links involve residues K666, K678, and K682. At R684 the chain carries Omega-N-methylarginine. The residue at position 687 (S687) is a Phosphoserine. A Glycyl lysine isopeptide (Lys-Gly) (interchain with G-Cter in ubiquitin) cross-link involves residue K688. A Phosphoserine modification is found at S691. K704 carries the N6-acetyllysine; alternate modification. K704 participates in a covalent cross-link: Glycyl lysine isopeptide (Lys-Gly) (interchain with G-Cter in ubiquitin); alternate. A Glycyl lysine isopeptide (Lys-Gly) (interchain with G-Cter in ubiquitin) cross-link involves residue K710. The residue at position 720 (K720) is an N6-acetyllysine; alternate. Residue K720 forms a Glycyl lysine isopeptide (Lys-Gly) (interchain with G-Cter in ubiquitin); alternate linkage. Y729 carries the post-translational modification Phosphotyrosine. 2 positions are modified to phosphoserine: S731 and S735. The interval 733–752 (VVSGDTSPRHLSNVSSTGSI) is disordered. A compositionally biased stretch (polar residues) spans 736-751 (GDTSPRHLSNVSSTGS). Phosphothreonine is present on T738. Residues S739, S744, S751, and S757 each carry the phosphoserine modification. T762 bears the Phosphothreonine mark.

Interacts with MARK1, MARK2, MARK3 and MARK4. Interacts with SQSTM1 when polyubiquitinated. Interacts with PSMC2 through SQSTM1. Interacts with FKBP4. Binds to CSNK1D. Interacts with SGK1. Interacts with EPM2A; the interaction dephosphorylates MAPT at Ser-396. Interacts with PIN1. Interacts with LRRK2. Interacts with LRP1, leading to endocytosis; this interaction is reduced in the presence of LRPAP1/RAP. Post-translationally, polyubiquitinated. Requires functional TRAF6 and may provoke SQSTM1-dependent degradation by the proteasome. In terms of processing, phosphorylation at various serine and threonine residues in S-P or T-P motifs by proline-directed protein kinases (PDPK1, CDK1, CDK5, GSK3, MAPK) (a few sites per protein in interphase, more in mitosis), and at serine residues in K-X-G-S motifs by MAP/microtubule affinity-regulating kinase (MARK1, MARK2, MARK3 or MARK4), causing detachment from microtubules, and their disassembly. Phosphorylation at Ser-597 by BRSK1 and BRSK2 in neurons affects ability to bind microtubules and plays a role in neuron polarization. Phosphorylated by PHK. Dephosphorylation at several serine and threonine residues by the serine/threonine phosphatase PPP5C.

It is found in the cytoplasm. Its subcellular location is the cytosol. The protein resides in the cell membrane. The protein localises to the cytoskeleton. It localises to the cell projection. It is found in the axon. Its subcellular location is the dendrite. Functionally, promotes microtubule assembly and stability, and might be involved in the establishment and maintenance of neuronal polarity. The C-terminus binds axonal microtubules while the N-terminus binds neural plasma membrane components, suggesting that tau functions as a linker protein between both. Axonal polarity is predetermined by tau localization (in the neuronal cell) in the domain of the cell body defined by the centrosome. The short isoforms allow plasticity of the cytoskeleton whereas the longer isoforms may preferentially play a role in its stabilization. This is Microtubule-associated protein tau (MAPT) from Hylobates lar (Lar gibbon).